The chain runs to 484 residues: UDP-N-acetylmuramoyl-L-alanyl-D-glutamate--2,6-diaminopimelate ligase (484 aa).

S30 is a binding site for UDP-N-acetyl-alpha-D-muramoyl-L-alanyl-D-glutamate. An ATP-binding site is contributed by 109–115 (GTNGKTS). UDP-N-acetyl-alpha-D-muramoyl-L-alanyl-D-glutamate is bound by residues 151–152 (TT), S178, and R186. K218 is subject to N6-carboxylysine. Meso-2,6-diaminopimelate contacts are provided by residues R379, 403–406 (DNPR), G455, and E459. Positions 403-406 (DNPR) match the Meso-diaminopimelate recognition motif motif.

Belongs to the MurCDEF family. MurE subfamily. Requires Mg(2+) as cofactor. Carboxylation is probably crucial for Mg(2+) binding and, consequently, for the gamma-phosphate positioning of ATP.

It localises to the cytoplasm. It carries out the reaction UDP-N-acetyl-alpha-D-muramoyl-L-alanyl-D-glutamate + meso-2,6-diaminopimelate + ATP = UDP-N-acetyl-alpha-D-muramoyl-L-alanyl-gamma-D-glutamyl-meso-2,6-diaminopimelate + ADP + phosphate + H(+). The protein operates within cell wall biogenesis; peptidoglycan biosynthesis. Functionally, catalyzes the addition of meso-diaminopimelic acid to the nucleotide precursor UDP-N-acetylmuramoyl-L-alanyl-D-glutamate (UMAG) in the biosynthesis of bacterial cell-wall peptidoglycan. In Clostridioides difficile (strain 630) (Peptoclostridium difficile), this protein is UDP-N-acetylmuramoyl-L-alanyl-D-glutamate--2,6-diaminopimelate ligase.